The chain runs to 758 residues: Polyribonucleotide nucleotidyltransferase (758 aa).

2 residues coordinate Mg(2+): D482 and D488. Residues 549–608 (PRVLSFYIDKDKISAAIGTKGKNIRSVCERSNAKIEIGDDGKVSVFAISSTEAEAAKNMM) enclose the KH domain. The region spanning 618 to 686 (GSIIDAKVVK…KGGCPKLSRR (69 aa)) is the S1 motif domain. Residues 707–758 (DGLNNRDNYYNNSFNKKPEDNYHSNRPTRPRSGFSNRSRPKFGNNDSSSGFY) form a disordered region. Positions 711 to 721 (NRDNYYNNSFN) are enriched in low complexity.

The protein belongs to the polyribonucleotide nucleotidyltransferase family. Requires Mg(2+) as cofactor.

The protein localises to the cytoplasm. The catalysed reaction is RNA(n+1) + phosphate = RNA(n) + a ribonucleoside 5'-diphosphate. Functionally, involved in mRNA degradation. Catalyzes the phosphorolysis of single-stranded polyribonucleotides processively in the 3'- to 5'-direction. This is Polyribonucleotide nucleotidyltransferase from Wolbachia pipientis subsp. Culex pipiens (strain wPip).